The primary structure comprises 561 residues: PR domain zinc finger protein 14 (561 aa).

Residues 1–20 form a disordered region; the sequence is MALPPSGETQSQDKANYLPQ. The span at 7–20 shows a compositional bias: polar residues; the sequence is GETQSQDKANYLPQ. Residues 184–373 are interaction with CBFA2T2; it reads GFNFTEEELS…GVPMNLRVTE (190 aa). The SET domain occupies 241 to 356; that stretch reads EGLCLMQTSF…RNQELLVWYG (116 aa). Residue tyrosine 355 coordinates S-adenosyl-L-methionine. The segment at 390–416 adopts a C2H2-type 1; atypical zinc-finger fold; it reads YRCERCGKVFTYKYYRDKHLKYTPCVD. 5 C2H2-type zinc fingers span residues 422-445, 451-473, 479-501, 507-530, and 536-558; these read FPCS…LHVH, YLCS…MRVH, YQCV…IRQH, FKCK…RRSH, and SSCD…MRLH.

This sequence belongs to the class V-like SAM-binding methyltransferase superfamily. In terms of assembly, interacts with CBFA2T2. In terms of tissue distribution, restricted to embryonic stem cells and primordial germ cells. Not detected in epiblast-derived stem cells.

The protein localises to the nucleus. Transcription factor that has both positive and negative roles on transcription. Plays a role in cellular pluripotency. Essential for germ cell development at 2 levels: the reacquisition of potential pluripotency, including SOX2 up-regulation, and successful epigenetic reprogramming, characterized by EHMT1 repression. Its association with CBFA2T2 is required for the functions in pluripotency and germ cell formation. This is PR domain zinc finger protein 14 (Prdm14) from Mus musculus (Mouse).